Consider the following 1225-residue polypeptide: Structural maintenance of chromosomes protein 1 (1225 aa).

An ATP-binding site is contributed by 33 to 40; sequence GPNGSGKS. Residues 173–489 adopt a coiled-coil conformation; it reads SGSIQYKKEY…SANNQEYDLN (317 aa). The SMC hinge domain maps to 527–641; sequence PGVKGLVHDL…CNTLNIAKDL (115 aa). Positions 679 to 1063 form a coiled coil; that stretch reads KEEYQSLMSL…LKIKKKRKEL (385 aa). Residues 1057 to 1061 carry the Nuclear localization signal motif; sequence KKKRK.

Belongs to the SMC family. SMC1 subfamily. In terms of assembly, cohesin complexes are composed of the SMC1 and SMC3 heterodimer attached via their SMC hinge domain, MCD1/SCC1 which link them, and IRR1/SCC3, which interacts with MCD1. The cohesin complex also interacts with SCC2, which is required for its association with chromosomes.

It localises to the nucleus. It is found in the chromosome. Functionally, involved in chromosome cohesion during cell cycle and in DNA repair. Central component of cohesin complex. The cohesin complex is required for the cohesion of sister chromatids after DNA replication. The cohesin complex apparently forms a large proteinaceous ring within which sister chromatids can be trapped. At anaphase, the complex is cleaved and dissociates from chromatin, allowing sister chromatids to segregate. This is Structural maintenance of chromosomes protein 1 (SMC1) from Saccharomyces cerevisiae (strain ATCC 204508 / S288c) (Baker's yeast).